The chain runs to 390 residues: Peroxisomal sarcosine oxidase (390 aa).

Residue 9-39 (DAIVIGAGIQGCFTAYHLAKHSKSVLLLEQF) coordinates FAD. Lys-126 and Lys-287 each carry N6-acetyllysine. Cys-319 bears the S-8alpha-FAD cysteine mark. The Microbody targeting signal signature appears at 388 to 390 (AHL).

The protein belongs to the MSOX/MTOX family. It depends on FAD as a cofactor. As to expression, kidney and liver.

Its subcellular location is the peroxisome. The enzyme catalyses sarcosine + O2 + H2O = formaldehyde + glycine + H2O2. The catalysed reaction is L-pipecolate + O2 = L-1-piperideine-6-carboxylate + H2O2 + H(+). Functionally, metabolizes sarcosine, L-pipecolic acid and L-proline. The protein is Peroxisomal sarcosine oxidase (Pipox) of Mus musculus (Mouse).